Consider the following 510-residue polypeptide: ATP synthase subunit alpha (510 aa).

An ATP-binding site is contributed by glycine 169–threonine 176.

The protein belongs to the ATPase alpha/beta chains family. F-type ATPases have 2 components, CF(1) - the catalytic core - and CF(0) - the membrane proton channel. CF(1) has five subunits: alpha(3), beta(3), gamma(1), delta(1), epsilon(1). CF(0) has three main subunits: a(1), b(2) and c(9-12). The alpha and beta chains form an alternating ring which encloses part of the gamma chain. CF(1) is attached to CF(0) by a central stalk formed by the gamma and epsilon chains, while a peripheral stalk is formed by the delta and b chains.

The protein resides in the cell inner membrane. The catalysed reaction is ATP + H2O + 4 H(+)(in) = ADP + phosphate + 5 H(+)(out). Functionally, produces ATP from ADP in the presence of a proton gradient across the membrane. The alpha chain is a regulatory subunit. In Nitrobacter winogradskyi (strain ATCC 25391 / DSM 10237 / CIP 104748 / NCIMB 11846 / Nb-255), this protein is ATP synthase subunit alpha.